The sequence spans 154 residues: uncharacterized protein (154 aa).

Positions 1–33 (MTKRGIQAFAGGIILATAVLAAVFYLTDEDQAA) are cleaved as a signal peptide.

This is an uncharacterized protein from Bacillus subtilis (strain 168).